Consider the following 248-residue polypeptide: Isoprenyl transferase (248 aa).

Residue Asp-23 is part of the active site. Asp-23 contributes to the Mg(2+) binding site. Substrate contacts are provided by residues 24–27 (GNGR), Trp-28, Arg-36, His-40, and 68–70 (STE). The active-site Proton acceptor is the Asn-71. Substrate contacts are provided by residues Trp-72, Arg-74, Arg-185, and 191-193 (RIS). Glu-204 serves as a coordination point for Mg(2+).

It belongs to the UPP synthase family. As to quaternary structure, homodimer. The cofactor is Mg(2+).

Its function is as follows. Catalyzes the condensation of isopentenyl diphosphate (IPP) with allylic pyrophosphates generating different type of terpenoids. This is Isoprenyl transferase from Neisseria meningitidis serogroup A / serotype 4A (strain DSM 15465 / Z2491).